Reading from the N-terminus, the 217-residue chain is External core antigen (217 aa).

Positions 1-20 are cleaved as a signal peptide; sequence MYLFHLCLVFACVSCPTVQA. The interval 26–28 is HBEAG; that stretch reads GWL. Basic residues predominate over residues 181–210; it reads RRGSARVVRSPRRRTPSPRRRRSQSPRRRP. The disordered stretch occupies residues 181–217; that stretch reads RRGSARVVRSPRRRTPSPRRRRSQSPRRRPQSPASNC. The 1; half-length repeat unit spans residues 190–196; it reads SPRRRTP. The interval 190 to 211 is 3 X 8 AA approximate repeats of S-P-R-R-R-R-[PS]-Q; sequence SPRRRTPSPRRRRSQSPRRRPQ. A propeptide spanning residues 190-217 is cleaved from the precursor; the sequence is SPRRRTPSPRRRRSQSPRRRPQSPASNC. 2 consecutive repeat copies span residues 197 to 204 and 205 to 211.

The protein belongs to the orthohepadnavirus precore antigen family. As to quaternary structure, homodimerizes. In terms of processing, phosphorylated. Post-translationally, cleaved by host furin.

The protein localises to the secreted. The protein resides in the host nucleus. Its function is as follows. May regulate immune response to the intracellular capsid in acting as a T-cell tolerogen, by having an immunoregulatory effect which prevents destruction of infected cells by cytotoxic T-cells. This immune regulation may predispose to chronicity during perinatal infections and prevent severe liver injury during adult infections. This chain is External core antigen, found in Urocitellus parryii kennicottii (ASHV).